A 907-amino-acid chain; its full sequence is Protein translocase subunit SecA (907 aa).

Residues glutamine 87, glycine 105–threonine 109, and aspartate 512 contribute to the ATP site. The interval alanine 870–lysine 897 is disordered. Residues cysteine 891, cysteine 893, cysteine 902, and histidine 903 each coordinate Zn(2+).

This sequence belongs to the SecA family. Monomer and homodimer. Part of the essential Sec protein translocation apparatus which comprises SecA, SecYEG and auxiliary proteins SecDF-YajC and YidC. Zn(2+) serves as cofactor.

The protein localises to the cell inner membrane. It is found in the cytoplasm. The enzyme catalyses ATP + H2O + cellular proteinSide 1 = ADP + phosphate + cellular proteinSide 2.. Functionally, part of the Sec protein translocase complex. Interacts with the SecYEG preprotein conducting channel. Has a central role in coupling the hydrolysis of ATP to the transfer of proteins into and across the cell membrane, serving both as a receptor for the preprotein-SecB complex and as an ATP-driven molecular motor driving the stepwise translocation of polypeptide chains across the membrane. The polypeptide is Protein translocase subunit SecA (Shewanella piezotolerans (strain WP3 / JCM 13877)).